Consider the following 161-residue polypeptide: EP300-interacting inhibitor of differentiation 2B (161 aa).

Disordered regions lie at residues 1-26 (MAEPTGLLEMSELPGDSSVPQVGTAS) and 54-77 (ARSMARMPGPVPGPIPSSVPGLAS).

As to quaternary structure, homodimer and heterodimer with EID2. Interacts with HDAC1 and HDAC2.

The protein resides in the nucleus. Functionally, acts as a repressor of MYOD-dependent transcription, glucocorticoid receptor-dependent transcription, and muscle differentiation. The chain is EP300-interacting inhibitor of differentiation 2B from Homo sapiens (Human).